Consider the following 199-residue polypeptide: MSCMPVSTKCNDIWVDFSCTGPSISELQKKEPKAWAAILRSHTNQQTAEDDTIIGSICDKQGLCSKDEYAYSQYCACVNSGTLWAECAFAPCNGNKNAYKTTEQRNILTNKQCPSGLTICQNIAEYGGSGNISDLYQNFNCNSVINTFLINVMNHPFLTLILIILILIIIYRLMSSSGGKHNDDKLPPPSLIFSNLNNF.

A glycan (N-linked (GlcNAc...) asparagine; by host) is linked at Asn-131. A helical transmembrane segment spans residues 150-170 (INVMNHPFLTLILIILILIII).

This sequence belongs to the asfivirus E199L family. As to quaternary structure, interacts with host PYCR2; this interaction results in autophagy activation. Contains intramolecular disulfide bonds.

Its subcellular location is the virion membrane. The protein resides in the host membrane. In terms of biological role, essential for viral fusion with host endosomal membrane and core release. Not required for virus morphogenesis and egress. Induces complete autophagy through the interaction with and down-regulation of host PYCR2. The protein is Inner membrane protein E199L of African swine fever virus (isolate Tick/South Africa/Pretoriuskop Pr4/1996) (ASFV).